Here is a 258-residue protein sequence, read N- to C-terminus: Alcohol dehydrogenase 2 (258 aa).

9–33 (IFVGGLGFIGYEACKQLMAKNMASF) is an NAD(+) binding site. Ser-137 lines the substrate pocket. The active-site Proton acceptor is Tyr-150.

It belongs to the short-chain dehydrogenases/reductases (SDR) family. In terms of assembly, homodimer.

It catalyses the reaction a primary alcohol + NAD(+) = an aldehyde + NADH + H(+). It carries out the reaction a secondary alcohol + NAD(+) = a ketone + NADH + H(+). The sequence is that of Alcohol dehydrogenase 2 (ADH2) from Ceratitis rosa (Natal fruit fly).